Consider the following 239-residue polypeptide: ATP-dependent dethiobiotin synthetase BioD (239 aa).

13–18 (EIGKTV) contacts ATP. Threonine 17 is a Mg(2+) binding site. Lysine 38 is a catalytic residue. Threonine 42 contributes to the substrate binding site. Lysine 59 and glutamate 111 together coordinate Mg(2+). Residues 111–114 (EGAG), 175–176 (NQ), and 204–206 (PSL) each bind ATP.

The protein belongs to the dethiobiotin synthetase family. Homodimer. Mg(2+) is required as a cofactor.

The protein resides in the cytoplasm. The catalysed reaction is (7R,8S)-7,8-diammoniononanoate + CO2 + ATP = (4R,5S)-dethiobiotin + ADP + phosphate + 3 H(+). The protein operates within cofactor biosynthesis; biotin biosynthesis; biotin from 7,8-diaminononanoate: step 1/2. Its function is as follows. Catalyzes a mechanistically unusual reaction, the ATP-dependent insertion of CO2 between the N7 and N8 nitrogen atoms of 7,8-diaminopelargonic acid (DAPA, also called 7,8-diammoniononanoate) to form a ureido ring. The polypeptide is ATP-dependent dethiobiotin synthetase BioD (Geobacillus sp. (strain WCH70)).